A 1488-amino-acid chain; its full sequence is MIERGKFRSLTLINWNGFFARTFDLDELVTTLSGGNGAGKSTTMAAFVTALIPDLTLLHFRNTTEAGATSGSRDKGLHGKLKAGVCYSMLDTINSRHQRVVVGVRLQQVAGRDRKVDIKPFAIQGLPMSVQPTQLVTETLNERQARVLSLAELKDKLDEMEGVQFKQFNSITDYHSLMFDLGIIARRLRSASDRSKFYRLIEASLYGGISSAITRSLRDYLLPENSGVRKAFQDMEAALRENRLTLEAIRVTQSDRDLFKHLISEATDYVAADYMRHANERRVHLDQALAFRRELYTSRKQLAAEQYKHVDMARELGEHNGAEGSLEADYQAASDHLNLVQTALRQQEKIERYEADLEELQIRLEEQNEVVAEAAEMQEENEARAEAAELEVDELKSQLADYQQALDVQQTRAIQYNQAISALARARELCHLPDLTPESAAEWLDTFQAKEQEATEKLLSLEQKMSVAQTAHSQFEQAYQLVAAINGPLARGEAWDVARELLRDGVNQRHLAEQVQPLRMRLSELEQRLREQQEAERLLAEFCKRQGKNFDIDELEALHQELEARIAALSDSVANASEQRLALRQEQEQLQSRIQHLMQRAPVWLAAQNSLNQLSEQCGEAFSSSQEVTEYLQQLLEREREAIVERDEVGARKNAVDEEIERLSQPGGAEDQRLNTLAERFGGVLLSEIYDDVSLEDAPYFSALYGPSRHAIVVPDLSQIAEQLEGLTDCPEDLYLIEGDPQSFDDSVFSVDELEKAVVVKIADRQWRYSRFPSLPIFGRAARENRIESLHAEREVLSERFATLSFDVQKTQRLHQAFSRFIGSHLSVAFEDDPEAEIRRLNGRRVELERALATHENDNQQQRLQFEQAKEGVSALNRLLPRLNLLADETLADRVDEIQERLDEAQEAARFVQQYGNQLAKLEPVVSVLQSDPEQFEQLKEDYAWSQQMQRDARQQAFALAEVVERRAHFSYSDSAEMLSGNSDLNEKLRQRLEQAEAERTRAREALRSHASQLSQYSQVLASLKSSYDTKKELLNDLQRELQDIGVRADSGAEERARQRRDELHAQLSNNRSRRNQLEKALTFCEAEMDNLTRKLRKLERDYHEMREQVVTAKAGWCAVMRMVKDNGVERRLHRRELAYLSADELRSMSDKALGALRLAVADNEHLRDVLRLSEDPKRPERKIQFFVAVYQHLRERIRQDIIRTDDPVEAIEQMEIELSRLTEELTSREQKLAISSRSVANIIRKTIQREQNRIRMLNQGLQSVSFGQVNSVRLNVNVRETHATLLDVLSEQQEQHQDLFNSNRLTFSEALAKLYQRLNPQIDMGQRTPQTIGEELLDYRNYLEMEVEVNRGSDGWLRAESGALSTGEAIGTGMSILVMVVQSWEDEARRLRGKDISPCRLLFLDEAARLDARSIATLFELCERLQMQLIIAAPENISPEKGTTYKLVRKVFQNTEHVHVVGLRGFAPQLPETLPGTQTEDTPSEAS.

34 to 41 (GGNGAGKS) contributes to the ATP binding site. Coiled coils occupy residues 326–418 (LEAD…QYNQ), 444–472 (LDTF…QTAH), and 509–602 (RHLA…QRAP). Positions 666-783 (PGGAEDQRLN…SLPIFGRAAR (118 aa)) are flexible hinge. 3 coiled-coil regions span residues 835 to 923 (EAEI…AKLE), 977 to 1116 (EMLS…AKAG), and 1209 to 1265 (VEAI…LQSV). Residues 1049–1074 (ADSGAEERARQRRDELHAQLSNNRSR) form a disordered region. The span at 1051–1065 (SGAEERARQRRDELH) shows a compositional bias: basic and acidic residues.

Belongs to the SMC family. MukB subfamily. In terms of assembly, homodimerization via its hinge domain. Binds to DNA via its C-terminal region. Interacts, and probably forms a ternary complex, with MukE and MukF via its C-terminal region. The complex formation is stimulated by calcium or magnesium. Interacts with tubulin-related protein FtsZ.

The protein localises to the cytoplasm. It localises to the nucleoid. Plays a central role in chromosome condensation, segregation and cell cycle progression. Functions as a homodimer, which is essential for chromosome partition. Involved in negative DNA supercoiling in vivo, and by this means organize and compact chromosomes. May achieve or facilitate chromosome segregation by condensation DNA from both sides of a centrally located replisome during cell division. The chain is Chromosome partition protein MukB from Salmonella arizonae (strain ATCC BAA-731 / CDC346-86 / RSK2980).